Here is a 755-residue protein sequence, read N- to C-terminus: Transcription factor kayak, isoforms A/B/F (755 aa).

Low complexity-rich tracts occupy residues 23 to 66 (FAQQ…LPTQ) and 149 to 159 (QQHYPSESQSS). 4 disordered regions span residues 23-75 (FAQQ…SQSV), 149-168 (QQHYPSESQSSASGWNPETP), 316-350 (LGQGSESEDSNASYNDTQMNEEQDTTDTSSAHTDS), and 383-440 (GSAS…KRRV). Residues 316 to 333 (LGQGSESEDSNASYNDTQ) show a composition bias toward polar residues. Composition is skewed to low complexity over residues 341-350 (TDTSSAHTDS) and 383-397 (GSASVGSSNANTSNT). Residues 418-481 (EQKRAVRRER…NQLEYLLATH (64 aa)) form the bZIP domain. The interval 420–439 (KRAVRRERNKQAAARCRKRR) is basic motif. A leucine-zipper region spans residues 446–453 (LTEEVEQL). A compositionally biased stretch (low complexity) spans 510-531 (AGSSGSGASSHHNHNSNDSSNG). 2 disordered regions span residues 510-552 (AGSS…PLDL) and 716-755 (DGGTGLTPVSGPLVPNSSSTNKHPLELPTPTAEPSKLVSL). Residues 539 to 549 (TLNSTGRSNSP) are compositionally biased toward polar residues. The residue at position 548 (S548) is a Phosphoserine.

This sequence belongs to the bZIP family. Fos subfamily. Homodimer. Heterodimer with Jra. The kay-Jra heterodimer binds more stably to the AP-1 site than either of the two proteins alone. In terms of tissue distribution, early expression in the embryo is mesodermal and some of this expression is localized to a region surrounding the cephalic furrow. Later in embryonic development expression is ectodermal, corresponding to muscle attachment sites. Also observed in part of the mid- and hindgut and in the anal pad.

The protein resides in the nucleus. In terms of biological role, developmentally regulated transcription factor AP-1 binds and recognizes the enhancer DNA sequence: 5'-TGA[CG]TCA-3'. May play a role in the function or determination of a particular subset of cells in the developing embryo. It is able to carry out its function either independently of or in conjunction with Jra. This chain is Transcription factor kayak, isoforms A/B/F (kay), found in Drosophila melanogaster (Fruit fly).